Reading from the N-terminus, the 379-residue chain is UDP-4-amino-4-deoxy-L-arabinose--oxoglutarate aminotransferase (379 aa).

An N6-(pyridoxal phosphate)lysine modification is found at Lys-182.

This sequence belongs to the DegT/DnrJ/EryC1 family. ArnB subfamily. As to quaternary structure, homodimer. Pyridoxal 5'-phosphate is required as a cofactor.

It carries out the reaction UDP-4-amino-4-deoxy-beta-L-arabinose + 2-oxoglutarate = UDP-beta-L-threo-pentopyranos-4-ulose + L-glutamate. It participates in nucleotide-sugar biosynthesis; UDP-4-deoxy-4-formamido-beta-L-arabinose biosynthesis; UDP-4-deoxy-4-formamido-beta-L-arabinose from UDP-alpha-D-glucuronate: step 2/3. It functions in the pathway bacterial outer membrane biogenesis; lipopolysaccharide biosynthesis. Catalyzes the conversion of UDP-4-keto-arabinose (UDP-Ara4O) to UDP-4-amino-4-deoxy-L-arabinose (UDP-L-Ara4N). The modified arabinose is attached to lipid A and is required for resistance to polymyxin and cationic antimicrobial peptides. This chain is UDP-4-amino-4-deoxy-L-arabinose--oxoglutarate aminotransferase, found in Salmonella choleraesuis (strain SC-B67).